The sequence spans 215 residues: UPF0502 protein Gbem_0102 (215 aa).

This sequence belongs to the UPF0502 family.

The chain is UPF0502 protein Gbem_0102 from Citrifermentans bemidjiense (strain ATCC BAA-1014 / DSM 16622 / JCM 12645 / Bem) (Geobacter bemidjiensis).